Here is a 254-residue protein sequence, read N- to C-terminus: Phosphate import ATP-binding protein PstB (254 aa).

The 241-residue stretch at 9–249 (MSVKDLDLFY…PVDKRTEDYI (241 aa)) folds into the ABC transporter domain. 41 to 48 (GPSGCGKS) contacts ATP.

Belongs to the ABC transporter superfamily. Phosphate importer (TC 3.A.1.7) family. As to quaternary structure, the complex is composed of two ATP-binding proteins (PstB), two transmembrane proteins (PstC and PstA) and a solute-binding protein (PstS).

It is found in the cell membrane. It carries out the reaction phosphate(out) + ATP + H2O = ADP + 2 phosphate(in) + H(+). In terms of biological role, part of the ABC transporter complex PstSACB involved in phosphate import. Responsible for energy coupling to the transport system. The chain is Phosphate import ATP-binding protein PstB from Clostridioides difficile (strain 630) (Peptoclostridium difficile).